The chain runs to 174 residues: 3-hydroxydecanoyl-[acyl-carrier-protein] dehydratase (174 aa).

His-73 is a catalytic residue.

This sequence belongs to the thioester dehydratase family. FabA subfamily. Homodimer.

It is found in the cytoplasm. The catalysed reaction is a (3R)-hydroxyacyl-[ACP] = a (2E)-enoyl-[ACP] + H2O. The enzyme catalyses (3R)-hydroxydecanoyl-[ACP] = (2E)-decenoyl-[ACP] + H2O. It carries out the reaction (2E)-decenoyl-[ACP] = (3Z)-decenoyl-[ACP]. Its pathway is lipid metabolism; fatty acid biosynthesis. In terms of biological role, necessary for the introduction of cis unsaturation into fatty acids. Catalyzes the dehydration of (3R)-3-hydroxydecanoyl-ACP to E-(2)-decenoyl-ACP and then its isomerization to Z-(3)-decenoyl-ACP. Can catalyze the dehydratase reaction for beta-hydroxyacyl-ACPs with saturated chain lengths up to 16:0, being most active on intermediate chain length. The protein is 3-hydroxydecanoyl-[acyl-carrier-protein] dehydratase of Teredinibacter turnerae (strain ATCC 39867 / T7901).